Here is a 327-residue protein sequence, read N- to C-terminus: Phenylalanine--tRNA ligase alpha subunit (327 aa).

Glutamate 252 lines the Mg(2+) pocket.

It belongs to the class-II aminoacyl-tRNA synthetase family. Phe-tRNA synthetase alpha subunit type 1 subfamily. In terms of assembly, tetramer of two alpha and two beta subunits. It depends on Mg(2+) as a cofactor.

Its subcellular location is the cytoplasm. The enzyme catalyses tRNA(Phe) + L-phenylalanine + ATP = L-phenylalanyl-tRNA(Phe) + AMP + diphosphate + H(+). The polypeptide is Phenylalanine--tRNA ligase alpha subunit (Cronobacter sakazakii (strain ATCC BAA-894) (Enterobacter sakazakii)).